We begin with the raw amino-acid sequence, 199 residues long: Imidazoleglycerol-phosphate dehydratase (199 aa).

Belongs to the imidazoleglycerol-phosphate dehydratase family.

Its subcellular location is the cytoplasm. It carries out the reaction D-erythro-1-(imidazol-4-yl)glycerol 3-phosphate = 3-(imidazol-4-yl)-2-oxopropyl phosphate + H2O. The protein operates within amino-acid biosynthesis; L-histidine biosynthesis; L-histidine from 5-phospho-alpha-D-ribose 1-diphosphate: step 6/9. This chain is Imidazoleglycerol-phosphate dehydratase, found in Desulfotalea psychrophila (strain LSv54 / DSM 12343).